Reading from the N-terminus, the 810-residue chain is Protein kinase C-binding protein NELL1 (810 aa).

The N-terminal stretch at 1–21 is a signal peptide; that stretch reads MPMDVILVLWFCVCTARTVLG. N-linked (GlcNAc...) asparagine glycosylation is found at asparagine 40, asparagine 53, asparagine 83, asparagine 224, asparagine 294, and asparagine 372. Residues 57-227 enclose the Laminin G-like domain; it reads AFLFQDVQRE…TQCPNLNRTC (171 aa). A VWFC 1 domain is found at 271-332; the sequence is KTCQVSGLLY…ISGQCCKVCR (62 aa). Disulfide bonds link cysteine 395/cysteine 407, cysteine 401/cysteine 416, and cysteine 418/cysteine 432. The Ca(2+) site is built by aspartate 434, isoleucine 435, and glutamate 437. The EGF-like 1; calcium-binding domain occupies 434–475; it reads DIDECAAKMHYCHANTVCVNLPGLYRCDCVPGYIRVDDFSCT. 15 disulfides stabilise this stretch: cysteine 438/cysteine 451, cysteine 445/cysteine 460, cysteine 462/cysteine 474, cysteine 480/cysteine 493, cysteine 487/cysteine 502, cysteine 504/cysteine 515, cysteine 519/cysteine 529, cysteine 523/cysteine 535, cysteine 537/cysteine 546, cysteine 553/cysteine 566, cysteine 560/cysteine 575, cysteine 577/cysteine 594, cysteine 600/cysteine 613, cysteine 607/cysteine 622, and cysteine 624/cysteine 630. Asparagine 453, leucine 454, and leucine 457 together coordinate Ca(2+). An EGF-like 2; calcium-binding domain is found at 476 to 516; sequence EHDDCGSGQHNCDKNAICTNTVQGHSCTCQPGYVGNGTICK. Asparagine 511 carries N-linked (GlcNAc...) asparagine glycosylation. The EGF-like 3 domain occupies 517 to 547; it reads AFCEEGCRYGGTCVAPNKCVCPSGFTGSHCE. Residues 549 to 587 form the EGF-like 4; calcium-binding domain; that stretch reads DIDECAEGFVECHNHSRCVNLPGWYHCECRSGFHDDGTY. Asparagine 562 carries an N-linked (GlcNAc...) asparagine glycan. Residues 596 to 631 enclose the EGF-like 5; calcium-binding domain; sequence DIDECALRTHTCWNDSACINLAGGFDCLCPSGPSCS. Asparagine 609 carries N-linked (GlcNAc...) asparagine glycosylation. 2 VWFC domains span residues 632–687 and 692–750; these read GDCP…PECD and SQCL…PRCV. A glycan (N-linked (GlcNAc...) asparagine) is linked at asparagine 708.

In terms of assembly, interacts with ATRAID; the interaction promotes osteoblast cell differentiation and mineralization. Homotrimer. Binds to PKC beta-1. Interacts with ROBO3.

It localises to the cytoplasm. It is found in the nucleus envelope. Its subcellular location is the secreted. Functionally, plays a role in the control of cell growth and differentiation. Promotes osteoblast cell differentiation and terminal mineralization. The polypeptide is Protein kinase C-binding protein NELL1 (Nell1) (Rattus norvegicus (Rat)).